A 123-amino-acid polypeptide reads, in one-letter code: Ribosome-binding factor A (123 aa).

It belongs to the RbfA family. In terms of assembly, monomer. Binds 30S ribosomal subunits, but not 50S ribosomal subunits or 70S ribosomes.

The protein localises to the cytoplasm. Its function is as follows. One of several proteins that assist in the late maturation steps of the functional core of the 30S ribosomal subunit. Associates with free 30S ribosomal subunits (but not with 30S subunits that are part of 70S ribosomes or polysomes). Required for efficient processing of 16S rRNA. May interact with the 5'-terminal helix region of 16S rRNA. This is Ribosome-binding factor A from Neisseria meningitidis serogroup C (strain 053442).